The primary structure comprises 521 residues: FAD-dependent monooxygenase DEP2 (521 aa).

A signal peptide spans 1 to 22; that stretch reads MHDSPPFKVIIVGAGVTGLTLA. Residues aspartate 36 and arginine 109 each coordinate FAD. Asparagine 139 and asparagine 220 each carry an N-linked (GlcNAc...) asparagine glycan. Residues aspartate 310 and glycine 323 each contribute to the FAD site. A helical transmembrane segment spans residues 477–497; that stretch reads ILVLWAGLWLAICFFHLVFSG. Asparagine 515 carries an N-linked (GlcNAc...) asparagine glycan.

This sequence belongs to the paxM FAD-dependent monooxygenase family. FAD is required as a cofactor.

The protein resides in the membrane. Its pathway is polyketide biosynthesis. Part of the gene cluster that mediates the biosynthesis of depudecin, a highly oxidized eleven-carbon linear polyketide that acts as a histone deacetylase (HDAC) inhibitor and makes a small contribution to pathogenesis. The reducing polyketide synthase DEP5 is the central enzyme in depudecin biosynthesis by yielding the backbone polyketide chain. The monooxygenases DEP2 and DEP4, as well as the uncharacterized protein DEP1, then act as tailoring enzymes to modify the intermediate polyketide chain into depudecin. This is FAD-dependent monooxygenase DEP2 from Fusarium langsethiae.